The primary structure comprises 417 residues: MAP kinase-interacting serine/threonine-protein kinase 1 (417 aa).

Residues 1–20 (MVSSQPVPIDDGGKRRKKKR) are disordered. The Protein kinase domain occupies 37–321 (RLTDELLGEG…AAQVLQHPWL (285 aa)). Residues 43–51 (LGEGAYAKV) and lysine 66 each bind ATP. The Proton acceptor role is filled by aspartate 158. Residues 397–417 (AHARKGGSHLTHTTVTSQGAT) are disordered. Over residues 406–417 (LTHTTVTSQGAT) the composition is skewed to polar residues.

The protein belongs to the protein kinase superfamily. CAMK Ser/Thr protein kinase family. Mg(2+) is required as a cofactor.

It carries out the reaction L-seryl-[protein] + ATP = O-phospho-L-seryl-[protein] + ADP + H(+). The catalysed reaction is L-threonyl-[protein] + ATP = O-phospho-L-threonyl-[protein] + ADP + H(+). Functionally, may play a role in the response to environmental stress and cytokines. Appears to regulate translation by phosphorylating EIF4E, thus increasing the affinity of this protein for the 7-methylguanosine-containing mRNA cap. The polypeptide is MAP kinase-interacting serine/threonine-protein kinase 1 (mknk1) (Xenopus tropicalis (Western clawed frog)).